Here is a 371-residue protein sequence, read N- to C-terminus: Galanin receptor type 2 (371 aa).

Residues Met1–Val27 are Extracellular-facing. N-linked (GlcNAc...) asparagine glycosylation occurs at Asn2. A helical transmembrane segment spans residues Pro28–Val48. Over Leu49–Thr59 the chain is Cytoplasmic. A helical membrane pass occupies residues Asn60–Phe80. The Extracellular portion of the chain corresponds to Gln81–Lys98. The cysteines at positions 97 and 174 are disulfide-linked. A helical membrane pass occupies residues Ala99–Leu120. At Asp121–Asn140 the chain is on the cytoplasmic side. Residues Ala141–Ser161 traverse the membrane as a helical segment. Over Tyr162–Met186 the chain is Extracellular. A helical membrane pass occupies residues Asp187–Ala207. Topologically, residues Arg208–Met236 are cytoplasmic. Residues Ile237–Cys257 form a helical membrane-spanning segment. Topologically, residues Val258–Trp259 are extracellular. A helical transmembrane segment spans residues Phe260–Ser280. The Cytoplasmic portion of the chain corresponds to Tyr281–Cys371.

It belongs to the G-protein coupled receptor 1 family.

The protein resides in the cell membrane. In terms of biological role, receptor for the hormone galanin, GALP and spexin-1. The activity of this receptor is mediated by G proteins that activate the phospholipase C/protein kinase C pathway (via G(q)) and that inhibit adenylyl cyclase (via G(i)). This Mus musculus (Mouse) protein is Galanin receptor type 2 (Galr2).